The chain runs to 361 residues: Porphobilinogen deaminase (361 aa).

Cys265 carries the post-translational modification S-(dipyrrolylmethanemethyl)cysteine. Residues Leu341 to Ser361 are disordered.

Belongs to the HMBS family. Dipyrromethane is required as a cofactor.

The enzyme catalyses 4 porphobilinogen + H2O = hydroxymethylbilane + 4 NH4(+). It functions in the pathway porphyrin-containing compound metabolism; protoporphyrin-IX biosynthesis; coproporphyrinogen-III from 5-aminolevulinate: step 2/4. Tetrapolymerization of the monopyrrole PBG into the hydroxymethylbilane pre-uroporphyrinogen in several discrete steps. This Debaryomyces hansenii (strain ATCC 36239 / CBS 767 / BCRC 21394 / JCM 1990 / NBRC 0083 / IGC 2968) (Yeast) protein is Porphobilinogen deaminase (HEM3).